A 1317-amino-acid polypeptide reads, in one-letter code: ABC transporter C family member 14 (1317 aa).

Positions 119–404 (NKYALISNIF…LPEDIYKAIG (286 aa)) constitute an ABC transmembrane type-1 1 domain. The next 5 membrane-spanning stretches (helical) occupy residues 127–147 (IFITIFIFLSPICLKFLINYI), 156–176 (SILKGILLCCLLCISILGQSI), 249–269 (ILILLGLLCYVVGPSGLVGFG), 341–361 (VLFWIFDHMMIETNATLVLVS), and 375–395 (LDVTFTAMTIFANLKLPLIYL). The segment at 426 to 451 (ENNQNINFNNNNNNNNNNKNNNNNDD) is disordered. Residues 427–449 (NNQNINFNNNNNNNNNNKNNNNN) are compositionally biased toward low complexity. The 221-residue stretch at 490-710 (ENEENIKINE…ISDKNDPNLI (221 aa)) folds into the ABC transporter 1 domain. 522 to 529 (GVVGSGKT) serves as a coordination point for ATP. The next 5 helical transmembrane spans lie at 734–754 (YFSYGTSGVTLFITISLFFIG), 778–798 (DSFYIGYYLLIIGIFVSLLMI), 871–891 (LISIVFIIPIIIIPLTLLFII), 969–989 (LEVMGCIMVFFTSLAAALFTS), and 992–1012 (GLAALSVTTALSLNGYLSWGV). In terms of domain architecture, ABC transmembrane type-1 2 spans 744-1027 (LFITISLFFI…LEVKMNSFQR (284 aa)). Positions 1071–1306 (IEFKNVEIKY…PNSKFNKLIK (236 aa)) constitute an ABC transporter 2 domain. Position 1105-1112 (1105-1112 (GRTGAGKT)) interacts with ATP.

It belongs to the ABC transporter superfamily. ABCC family. Conjugate transporter (TC 3.A.1.208) subfamily.

The protein localises to the membrane. The protein is ABC transporter C family member 14 (abcC14) of Dictyostelium discoideum (Social amoeba).